Here is a 366-residue protein sequence, read N- to C-terminus: Pyrimidine monooxygenase RutA (366 aa).

FMN contacts are provided by residues 49–50, asparagine 115, glutamate 124, 140–141, and serine 190; these read IK and RY.

This sequence belongs to the NtaA/SnaA/DszA monooxygenase family. RutA subfamily.

It catalyses the reaction uracil + FMNH2 + NADH + O2 = (Z)-3-ureidoacrylate + FMN + NAD(+) + H2O + H(+). The enzyme catalyses thymine + FMNH2 + NADH + O2 = (Z)-2-methylureidoacrylate + FMN + NAD(+) + H2O + H(+). Catalyzes the pyrimidine ring opening between N-3 and C-4 by an unusual flavin hydroperoxide-catalyzed mechanism, adding oxygen atoms in the process to yield ureidoacrylate peracid, that immediately reacts with FMN forming ureidoacrylate and FMN-N(5)-oxide. The FMN-N(5)-oxide reacts spontaneously with NADH to produce FMN. Requires the flavin reductase RutF to regenerate FMN in vivo. The sequence is that of Pyrimidine monooxygenase RutA from Serratia proteamaculans (strain 568).